A 207-amino-acid polypeptide reads, in one-letter code: LexA repressor (207 aa).

The segment at residues 28 to 48 (VREIGEAVGLASSSTVHGHLS) is a DNA-binding region (H-T-H motif). Catalysis depends on for autocatalytic cleavage activity residues S130 and K168.

Belongs to the peptidase S24 family. As to quaternary structure, homodimer.

The catalysed reaction is Hydrolysis of Ala-|-Gly bond in repressor LexA.. Its function is as follows. Represses a number of genes involved in the response to DNA damage (SOS response), including recA and lexA. In the presence of single-stranded DNA, RecA interacts with LexA causing an autocatalytic cleavage which disrupts the DNA-binding part of LexA, leading to derepression of the SOS regulon and eventually DNA repair. This chain is LexA repressor, found in Staphylococcus aureus (strain MSSA476).